Consider the following 96-residue polypeptide: Small ribosomal subunit protein bS6 (96 aa).

The protein belongs to the bacterial ribosomal protein bS6 family.

In terms of biological role, binds together with bS18 to 16S ribosomal RNA. This chain is Small ribosomal subunit protein bS6, found in Synechococcus sp. (strain JA-2-3B'a(2-13)) (Cyanobacteria bacterium Yellowstone B-Prime).